Here is a 347-residue protein sequence, read N- to C-terminus: Chlorophyllase type 0 (347 aa).

The N-terminal stretch at M1 to A19 is a signal peptide. The propeptide occupies Q20–N30. Positions G160–G164 match the GXSXG motif. The active-site Nucleophile is S162. Residue D191 is the Charge relay system of the active site. N-linked (GlcNAc...) asparagine glycosylation is found at N215, N229, and N251. H262 (charge relay system) is an active-site residue. N321 carries an N-linked (GlcNAc...) asparagine glycan.

Belongs to the AB hydrolase superfamily. Lipase family.

It catalyses the reaction a chlorophyll + H2O = a chlorophyllide + phytol + H(+). It carries out the reaction chlorophyll a + H2O = phytol + chlorophyllide a + H(+). It functions in the pathway porphyrin-containing compound metabolism; chlorophyll degradation. Its activity is regulated as follows. Inhibited by diisopropyl fluorophosphate (DFP), phenylmethanesulfonyl fluoride (PMSF) or p-chloromercuribenzoic acid (PCMB), but not by N-ethylmaleimide (NEM) or iodoacetamide. Its function is as follows. Catalyzes the hydrolysis of ester bond in chlorophyll to yield chlorophyllide and phytol. The chain is Chlorophyllase type 0 from Chenopodium album (Fat hen).